Here is a 431-residue protein sequence, read N- to C-terminus: Serine hydroxymethyltransferase (431 aa).

(6S)-5,6,7,8-tetrahydrofolate contacts are provided by residues Leu126 and 130–132 (GHL). Lys235 carries the N6-(pyridoxal phosphate)lysine modification.

Belongs to the SHMT family. Homodimer. Requires pyridoxal 5'-phosphate as cofactor.

It localises to the cytoplasm. The catalysed reaction is (6R)-5,10-methylene-5,6,7,8-tetrahydrofolate + glycine + H2O = (6S)-5,6,7,8-tetrahydrofolate + L-serine. It functions in the pathway one-carbon metabolism; tetrahydrofolate interconversion. It participates in amino-acid biosynthesis; glycine biosynthesis; glycine from L-serine: step 1/1. Functionally, catalyzes the reversible interconversion of serine and glycine with tetrahydrofolate (THF) serving as the one-carbon carrier. This reaction serves as the major source of one-carbon groups required for the biosynthesis of purines, thymidylate, methionine, and other important biomolecules. Also exhibits THF-independent aldolase activity toward beta-hydroxyamino acids, producing glycine and aldehydes, via a retro-aldol mechanism. In Nocardia farcinica (strain IFM 10152), this protein is Serine hydroxymethyltransferase.